The following is a 251-amino-acid chain: Appressoria-specific virulence factor GAS1 (251 aa).

A signal peptide spans 1–21; sequence MSLKSLIAATILAAPLVAGHG. The interval 40 to 76 is disordered; it reads VTSTPRDGTRRDPFQQDSTRFKGQQADTFGETVGGGQ. The span at 54–66 shows a compositional bias: polar residues; sequence QQDSTRFKGQQAD.

Its subcellular location is the cytoplasm. Functionally, appressoria-specific virulence factor required for appressorial penetration in host and lesion development. This is Appressoria-specific virulence factor GAS1 from Pyricularia oryzae (strain 70-15 / ATCC MYA-4617 / FGSC 8958) (Rice blast fungus).